Consider the following 805-residue polypeptide: Mediator of RNA polymerase II transcription subunit 25 (805 aa).

Disordered regions lie at residues 308-332 (NQMPPTSAVGTPFNQPPPPAMPQNT) and 647-691 (QQPQ…NPQL). A compositionally biased stretch (low complexity) spans 647–678 (QQPQQAASQAPPQATQTTVQAPGQPQNPQPGA). The LXXLL motif motif lies at 691–695 (LRNLL).

This sequence belongs to the Mediator complex subunit 25 family. In terms of assembly, component of the Mediator complex.

Its subcellular location is the nucleus. In terms of biological role, component of the Mediator complex, a coactivator involved in the regulated transcription of nearly all RNA polymerase II-dependent genes. Mediator functions as a bridge to convey information from gene-specific regulatory proteins to the basal RNA polymerase II transcription machinery. Mediator is recruited to promoters by direct interactions with regulatory proteins and serves as a scaffold for the assembly of a functional preinitiation complex with RNA polymerase II and the general transcription factors. The protein is Mediator of RNA polymerase II transcription subunit 25 (med25) of Xenopus tropicalis (Western clawed frog).